Consider the following 574-residue polypeptide: ATP-grasp enzyme fsqD (574 aa).

Positions 234-462 constitute an ATP-grasp domain; it reads NKFLTSKYVG…YWGLAAVLGV (229 aa). 263–318 lines the ATP pocket; it reads ALPYPLIVKPCDGWSSEGVSRVESPDAFPAAVKSIDTSRHGTEFVMEPYCDGPEVD. Mg(2+)-binding residues include Glu394, Glu431, and Asn433. Mn(2+)-binding residues include Glu394, Glu431, and Asn433.

Mg(2+) serves as cofactor. The cofactor is Mn(2+).

Its pathway is secondary metabolite biosynthesis. ATP-grasp enzyme; part of the gene cluster that mediates the biosynthesis of the isoquinoline alkaloids fumisoquin A, fumisoquin B and fumisoquin C; as well as small amounts of fumipyrrole as a shunt metabolite. The products of the cluster lead to a brown coloration and are important for growth and conidiation. The nonribosomal peptide synthetase-like protein fsqF, which lacks a canonical condensation domain, is required for addition of a serine-derived dehydroalanine moiety to activated tyrosine but is not essential for the subsequent steps leading to isoquinoline formation. A different enzyme, most likely the ATP-grasp enzyme fsqD, is responsible for activation of tyrosine. Three additional enzymes encoded by the fsq cluster, the N-methyltransferase fsqC, the phenol 2-monooxygenase fsqG and the FAD-dependent oxidase fsqB, catalyze the formation of the isoquinoline ring system in the fumisoquins. FsqB converts the fspF thiolation domain-bound (2S,4S,5S)-2-amino-6-(3,4-dihydroxyphenyl)-4-hydroxy-5-(methylamino)hexanoyl into isoquinoline. The cyclization most likely proceeds via a two-step mechanism, beginning with FAD-dependent oxidation of the methyl group to an iminium species followed by electrophilic attack on the deprotonated phenol. This Aspergillus fumigatus (strain ATCC MYA-4609 / CBS 101355 / FGSC A1100 / Af293) (Neosartorya fumigata) protein is ATP-grasp enzyme fsqD.